Consider the following 433-residue polypeptide: Pyrimidine-nucleoside phosphorylase (433 aa).

81 to 83 (KHS) contributes to the phosphate binding site. The K(+) site is built by Gly-88 and Thr-90. Phosphate is bound by residues Thr-92, 108 to 110 (KMS), and Thr-120. 2 residues coordinate substrate: Arg-168 and Lys-187. K(+) contacts are provided by Leu-243, Ala-246, and Glu-255.

Belongs to the thymidine/pyrimidine-nucleoside phosphorylase family. Homodimer. K(+) serves as cofactor.

The catalysed reaction is uridine + phosphate = alpha-D-ribose 1-phosphate + uracil. It carries out the reaction thymidine + phosphate = 2-deoxy-alpha-D-ribose 1-phosphate + thymine. The enzyme catalyses 2'-deoxyuridine + phosphate = 2-deoxy-alpha-D-ribose 1-phosphate + uracil. Its function is as follows. Catalyzes phosphorolysis of the pyrimidine nucleosides uridine, thymidine and 2'-deoxyuridine with the formation of the corresponding pyrimidine base and ribose-1-phosphate. In Staphylococcus epidermidis (strain ATCC 12228 / FDA PCI 1200), this protein is Pyrimidine-nucleoside phosphorylase (pdp).